The sequence spans 236 residues: CHD1 helical C-terminal domain containing protein 1 (236 aa).

A disordered region spans residues 1–29; that stretch reads MEASDWQGGEGDKPLEKVGSVPCLERSSS. Residues 44 to 145 are CHD1 helical C-terminal domain (CHCT); it reads LSQDTFKICK…TNQTAKFLAA (102 aa). The tract at residues 197–236 is disordered; the sequence is LEEPRSSHCSRGDSLRKLPQKPKLKKKRIKERLESPKSCS. Basic and acidic residues predominate over residues 198–212; it reads EEPRSSHCSRGDSLR. The segment covering 214 to 226 has biased composition (basic residues); it reads LPQKPKLKKKRIK. Basic and acidic residues predominate over residues 227–236; the sequence is ERLESPKSCS.

As to expression, exclusively expressed in testes.

The protein resides in the cytoplasm. It localises to the nucleus. Its function is as follows. May play a role in regulation of apoptosis. In Mus musculus (Mouse), this protein is CHD1 helical C-terminal domain containing protein 1 (Chct1).